The primary structure comprises 453 residues: o-phthalyl amidase (453 aa).

In terms of assembly, monomer. In terms of processing, the N-terminus is blocked.

It catalyses the reaction a phtalamide + H2O = phthalate + a primary amine. Inhibited by iodoacetate, p-hydroxymercuric benzoate and copper ions. Catalyzes the removal of the phthalyl group from phthalyl amides generating phthalate and an amine. The enzyme has a broad substrate specificity and hydrolyzes phthalylated amino acids, peptides, beta-lactams, aromatic and aliphatic amines; substitutions allowed on the phthalyl group include 6-F, 6-NH(2), 3-OH, and a nitrogen in the aromatic ring ortho to the carboxy group attached to the amine. The chain is o-phthalyl amidase from Xanthobacter agilis.